The sequence spans 443 residues: Threonine/serine transporter TdcC (443 aa).

11 consecutive transmembrane segments (helical) span residues 24 to 44 (WVLG…PISA), 45 to 65 (GIGG…IAFF), 95 to 115 (VGGV…LWIY), 140 to 160 (VVAL…KDLM), 163 to 183 (VMGY…LSLI), 207 to 227 (ILVT…FSPI), 259 to 279 (ASVL…FTLS), 319 to 339 (ASII…LGTL), 363 to 383 (LNMI…YINP), 385 to 405 (ILDL…CLLP), and 423 to 443 (SNYF…YQLM).

It belongs to the amino acid/polyamine transporter 2 family. SdaC/TdcC subfamily.

Its subcellular location is the cell inner membrane. It carries out the reaction L-threonine(in) + H(+)(in) = L-threonine(out) + H(+)(out). The enzyme catalyses L-serine(in) + H(+)(in) = L-serine(out) + H(+)(out). Functionally, involved in the import of threonine and serine into the cell, with the concomitant import of a proton (symport system). The sequence is that of Threonine/serine transporter TdcC from Edwardsiella tarda.